The chain runs to 380 residues: L-lactate dehydrogenase (380 aa).

The 380-residue stretch at 1–380 (MIISSTTDFR…DRSILAKTDR (380 aa)) folds into the FMN hydroxy acid dehydrogenase domain. Position 24 (tyrosine 24) interacts with substrate. Residues serine 106 and glutamine 127 each contribute to the FMN site. Residue tyrosine 129 coordinates substrate. Position 155 (threonine 155) interacts with FMN. Arginine 164 serves as a coordination point for substrate. Lysine 251 serves as a coordination point for FMN. The active-site Proton acceptor is the histidine 275. Position 278 (arginine 278) interacts with substrate. Residue 306 to 330 (DGGVRSGLDVVRMLALGAKGVLLGR) coordinates FMN.

It belongs to the FMN-dependent alpha-hydroxy acid dehydrogenase family. FMN serves as cofactor.

It localises to the cell inner membrane. The catalysed reaction is (S)-lactate + A = pyruvate + AH2. Its function is as follows. Catalyzes the conversion of L-lactate to pyruvate. Is coupled to the respiratory chain. This is L-lactate dehydrogenase from Caulobacter sp. (strain K31).